Consider the following 164-residue polypeptide: Endoribonuclease YbeY (164 aa).

Residues histidine 114, histidine 118, and histidine 124 each coordinate Zn(2+).

This sequence belongs to the endoribonuclease YbeY family. The cofactor is Zn(2+).

It is found in the cytoplasm. Its function is as follows. Single strand-specific metallo-endoribonuclease involved in late-stage 70S ribosome quality control and in maturation of the 3' terminus of the 16S rRNA. This Mycoplasmoides gallisepticum (strain R(low / passage 15 / clone 2)) (Mycoplasma gallisepticum) protein is Endoribonuclease YbeY.